The primary structure comprises 433 residues: 3-phosphoshikimate 1-carboxyvinyltransferase (433 aa).

3 residues coordinate 3-phosphoshikimate: K21, S22, and R26. K21 is a binding site for phosphoenolpyruvate. Residues G96 and R124 each contribute to the phosphoenolpyruvate site. Residues S167, S168, Q169, S195, D310, and K337 each contribute to the 3-phosphoshikimate site. Residue Q169 participates in phosphoenolpyruvate binding. D310 acts as the Proton acceptor in catalysis. Residues R341, R384, and K410 each coordinate phosphoenolpyruvate.

Belongs to the EPSP synthase family. Monomer.

The protein localises to the cytoplasm. The catalysed reaction is 3-phosphoshikimate + phosphoenolpyruvate = 5-O-(1-carboxyvinyl)-3-phosphoshikimate + phosphate. It functions in the pathway metabolic intermediate biosynthesis; chorismate biosynthesis; chorismate from D-erythrose 4-phosphate and phosphoenolpyruvate: step 6/7. Catalyzes the transfer of the enolpyruvyl moiety of phosphoenolpyruvate (PEP) to the 5-hydroxyl of shikimate-3-phosphate (S3P) to produce enolpyruvyl shikimate-3-phosphate and inorganic phosphate. This Clostridium botulinum (strain Eklund 17B / Type B) protein is 3-phosphoshikimate 1-carboxyvinyltransferase.